A 307-amino-acid chain; its full sequence is Aspartate carbamoyltransferase catalytic subunit (307 aa).

Positions 54 and 55 each coordinate carbamoyl phosphate. Lys83 is a binding site for L-aspartate. Positions 104, 132, and 135 each coordinate carbamoyl phosphate. Positions 165 and 228 each coordinate L-aspartate. Carbamoyl phosphate contacts are provided by Leu267 and Pro268.

This sequence belongs to the aspartate/ornithine carbamoyltransferase superfamily. ATCase family. In terms of assembly, heterododecamer (2C3:3R2) of six catalytic PyrB chains organized as two trimers (C3), and six regulatory PyrI chains organized as three dimers (R2).

It carries out the reaction carbamoyl phosphate + L-aspartate = N-carbamoyl-L-aspartate + phosphate + H(+). It functions in the pathway pyrimidine metabolism; UMP biosynthesis via de novo pathway; (S)-dihydroorotate from bicarbonate: step 2/3. In terms of biological role, catalyzes the condensation of carbamoyl phosphate and aspartate to form carbamoyl aspartate and inorganic phosphate, the committed step in the de novo pyrimidine nucleotide biosynthesis pathway. The polypeptide is Aspartate carbamoyltransferase catalytic subunit (Clostridium acetobutylicum (strain ATCC 824 / DSM 792 / JCM 1419 / IAM 19013 / LMG 5710 / NBRC 13948 / NRRL B-527 / VKM B-1787 / 2291 / W)).